Here is a 198-residue protein sequence, read N- to C-terminus: Ribonuclease HII (198 aa).

The 189-residue stretch at 10–198 folds into the RNase H type-2 domain; sequence HLVAGVDEVG…PVKRALGLVC (189 aa). Residues Asp16, Glu17, and Asp108 each contribute to the a divalent metal cation site.

Belongs to the RNase HII family. It depends on Mn(2+) as a cofactor. Requires Mg(2+) as cofactor.

It is found in the cytoplasm. The catalysed reaction is Endonucleolytic cleavage to 5'-phosphomonoester.. In terms of biological role, endonuclease that specifically degrades the RNA of RNA-DNA hybrids. The polypeptide is Ribonuclease HII (Enterobacter sp. (strain 638)).